Consider the following 487-residue polypeptide: UDP-N-acetylmuramoyl-L-alanyl-D-glutamate--2,6-diaminopimelate ligase (487 aa).

Residues Leu23 and Ser25 each coordinate UDP-N-acetyl-alpha-D-muramoyl-L-alanyl-D-glutamate. Residue 108–114 (GTNGKTS) coordinates ATP. Residues 150–151 (TT), Ser177, Gln183, and Arg185 contribute to the UDP-N-acetyl-alpha-D-muramoyl-L-alanyl-D-glutamate site. Lys217 is subject to N6-carboxylysine. Residues Arg378, 402 to 405 (DNPR), Gly453, and Glu457 each bind meso-2,6-diaminopimelate. Positions 402-405 (DNPR) match the Meso-diaminopimelate recognition motif motif.

Belongs to the MurCDEF family. MurE subfamily. Mg(2+) is required as a cofactor. In terms of processing, carboxylation is probably crucial for Mg(2+) binding and, consequently, for the gamma-phosphate positioning of ATP.

Its subcellular location is the cytoplasm. It carries out the reaction UDP-N-acetyl-alpha-D-muramoyl-L-alanyl-D-glutamate + meso-2,6-diaminopimelate + ATP = UDP-N-acetyl-alpha-D-muramoyl-L-alanyl-gamma-D-glutamyl-meso-2,6-diaminopimelate + ADP + phosphate + H(+). It participates in cell wall biogenesis; peptidoglycan biosynthesis. Catalyzes the addition of meso-diaminopimelic acid to the nucleotide precursor UDP-N-acetylmuramoyl-L-alanyl-D-glutamate (UMAG) in the biosynthesis of bacterial cell-wall peptidoglycan. The sequence is that of UDP-N-acetylmuramoyl-L-alanyl-D-glutamate--2,6-diaminopimelate ligase from Pseudomonas aeruginosa (strain ATCC 15692 / DSM 22644 / CIP 104116 / JCM 14847 / LMG 12228 / 1C / PRS 101 / PAO1).